We begin with the raw amino-acid sequence, 181 residues long: Oligoribonuclease (181 aa).

An Exonuclease domain is found at 8–171 (LIWIDLEMTG…DDIRESVAEL (164 aa)). The active site involves tyrosine 129.

This sequence belongs to the oligoribonuclease family. In terms of assembly, homodimer.

It is found in the cytoplasm. Functionally, 3'-to-5' exoribonuclease specific for small oligoribonucleotides. This chain is Oligoribonuclease, found in Escherichia coli O157:H7.